We begin with the raw amino-acid sequence, 357 residues long: 3-dehydroquinate synthase (357 aa).

NAD(+) contacts are provided by residues 104–108, 128–129, lysine 141, and 168–171; these read GVVGD, TT, and FLET. Positions 183, 243, and 260 each coordinate Zn(2+).

This sequence belongs to the sugar phosphate cyclases superfamily. Dehydroquinate synthase family. Co(2+) is required as a cofactor. The cofactor is Zn(2+). NAD(+) serves as cofactor.

The protein localises to the cytoplasm. It carries out the reaction 7-phospho-2-dehydro-3-deoxy-D-arabino-heptonate = 3-dehydroquinate + phosphate. The protein operates within metabolic intermediate biosynthesis; chorismate biosynthesis; chorismate from D-erythrose 4-phosphate and phosphoenolpyruvate: step 2/7. In terms of biological role, catalyzes the conversion of 3-deoxy-D-arabino-heptulosonate 7-phosphate (DAHP) to dehydroquinate (DHQ). In Streptococcus pyogenes serotype M5 (strain Manfredo), this protein is 3-dehydroquinate synthase.